The following is a 45-amino-acid chain: Toxin Bcs III 15.09 (45 aa).

In terms of domain architecture, EGF-like spans 2–44; sequence QGTACTGEHAHNFCLNGGTCRHIQSLGEYYCICPEGYTGHRCE. 3 disulfide bridges follow: C6/C21, C15/C32, and C34/C43.

Its subcellular location is the secreted. It is found in the nematocyst. Functionally, has both toxic and EGF activity. The polypeptide is Toxin Bcs III 15.09 (Bunodosoma caissarum (Sea anemone)).